Here is a 187-residue protein sequence, read N- to C-terminus: Hypoxanthine/guanine phosphoribosyltransferase (187 aa).

Belongs to the purine/pyrimidine phosphoribosyltransferase family. Archaeal HPRT subfamily. As to quaternary structure, homodimer.

The protein resides in the cytoplasm. The catalysed reaction is IMP + diphosphate = hypoxanthine + 5-phospho-alpha-D-ribose 1-diphosphate. The enzyme catalyses GMP + diphosphate = guanine + 5-phospho-alpha-D-ribose 1-diphosphate. It participates in purine metabolism; IMP biosynthesis via salvage pathway; IMP from hypoxanthine: step 1/1. In terms of biological role, catalyzes a salvage reaction resulting in the formation of IMP that is energically less costly than de novo synthesis. The chain is Hypoxanthine/guanine phosphoribosyltransferase from Ferroglobus placidus (strain DSM 10642 / AEDII12DO).